Reading from the N-terminus, the 700-residue chain is Elongation factor G (700 aa).

The tr-type G domain maps to 8–290; that stretch reads SLYRNIGISA…AVIDYLPAPT (283 aa). Residues 17 to 24, 88 to 92, and 142 to 145 contribute to the GTP site; these read AHIDAGKT, DTPGH, and NKMD.

Belongs to the TRAFAC class translation factor GTPase superfamily. Classic translation factor GTPase family. EF-G/EF-2 subfamily.

It localises to the cytoplasm. Its function is as follows. Catalyzes the GTP-dependent ribosomal translocation step during translation elongation. During this step, the ribosome changes from the pre-translocational (PRE) to the post-translocational (POST) state as the newly formed A-site-bound peptidyl-tRNA and P-site-bound deacylated tRNA move to the P and E sites, respectively. Catalyzes the coordinated movement of the two tRNA molecules, the mRNA and conformational changes in the ribosome. In Histophilus somni (strain 129Pt) (Haemophilus somnus), this protein is Elongation factor G.